The primary structure comprises 376 residues: MSSSNGRGGAGGVGGSSEHPQYPKVVLVTGACRFLGGYLTARLAQNPLINRVIAVDAIAPSKDMLRRMGRAEFVRADIRNPFIAKVIRNGEVDTVVHAAAASYAPRSGGSAALKELNVMGAMQLFAACQKAPSVRRVVLKSTSEVYGSSPHDPVMFTEDSSSRRPFSQGFPKDSLDIEGYVRALGRRRPDIAVTILRLANMIGPAMDTTLSRYLAGPLVPTIFGRDARLQLLHEQDALGALERAAMAGKAGTFNIGADGILMLSQAIRRAGRIPVPVPGFGVWALDSLRRANHYTELNREQFAYLSYGRVMDTTRMRVELGYQPKWTTVEAFDDYFRGRGLTPIIDPHRVRSWEGRAVGLAQRWGSRNPIPWSGLR.

It belongs to the NAD(P)-dependent epimerase/dehydratase family.

This is an uncharacterized protein from Mycobacterium bovis (strain ATCC BAA-935 / AF2122/97).